A 302-amino-acid polypeptide reads, in one-letter code: Alpha-ketoglutarate-dependent dioxygenase alkB homolog 4 (302 aa).

Ala2 is subject to N-acetylalanine. Thr8 is modified (phosphothreonine). The Fe2OG dioxygenase domain occupies 150–274 (PVEQCNLDYC…RVCVTFRELS (125 aa)). The Fe cation site is built by His169, Asp171, and His254. A 2-oxoglutarate-binding site is contributed by Arg265.

The protein belongs to the alkB family. In terms of assembly, interacts with ZFHX3, MLLT3, MLLT1, HSF4, EP300, TES, EIF3C, MTMR6 and PSMA6. Fe(2+) serves as cofactor. Widely expressed, with highest expression in pancreas, ovary and spleen.

It is found in the cytoplasm. It localises to the nucleus. Its subcellular location is the nucleolus. The protein resides in the midbody. The catalysed reaction is an N(6)-methyl-2'-deoxyadenosine in DNA + 2-oxoglutarate + O2 = a 2'-deoxyadenosine in DNA + formaldehyde + succinate + CO2. It carries out the reaction N(6)-methyl-L-lysyl-[protein] + 2-oxoglutarate + O2 = L-lysyl-[protein] + formaldehyde + succinate + CO2. Dioxygenase that mediates demethylation of actin monomethylated at 'Lys-84' (K84me1), thereby acting as a regulator of actomyosin-processes. Demethylation of actin K84me1 is required for maintaining actomyosin dynamics supporting normal cleavage furrow ingression during cytokinesis and cell migration. In addition to proteins, also demethylates DNA: specifically demethylates DNA methylated on the 6th position of adenine (N(6)-methyladenosine) DNA, thereby regulating Polycomb silencing. The sequence is that of Alpha-ketoglutarate-dependent dioxygenase alkB homolog 4 from Homo sapiens (Human).